A 232-amino-acid polypeptide reads, in one-letter code: Ion-translocating oxidoreductase complex subunit E (232 aa).

A run of 6 helical transmembrane segments spans residues 18 to 38 (GLVQ…ITNA), 39 to 59 (LGLG…VSLV), 69 to 89 (IPVF…LINA), 93 to 113 (GLYL…IIIG), 127 to 147 (AAFD…VLGA), and 182 to 202 (PFLL…LIAL).

This sequence belongs to the NqrDE/RnfAE family. The complex is composed of six subunits: RnfA, RnfB, RnfC, RnfD, RnfE and RnfG.

Its subcellular location is the cell inner membrane. Functionally, part of a membrane-bound complex that couples electron transfer with translocation of ions across the membrane. In Shewanella sp. (strain W3-18-1), this protein is Ion-translocating oxidoreductase complex subunit E.